The chain runs to 785 residues: Mitochondrial intermediate peptidase (785 aa).

Residues 1–27 constitute a mitochondrion transit peptide; that stretch reads MLKAVMPRPWVCSRCVKRQIQSSRGLA. The interval 26–52 is disordered; it reads LATASTQYREPRPVPTDHSAPGAKHDD. Position 566 (His-566) interacts with Zn(2+). Residue Glu-567 is part of the active site. Residues His-570 and His-573 each coordinate Zn(2+).

This sequence belongs to the peptidase M3 family. It depends on Zn(2+) as a cofactor.

The protein localises to the mitochondrion matrix. It carries out the reaction Release of an N-terminal octapeptide as second stage of processing of some proteins imported into the mitochondrion.. Cleaves proteins, imported into the mitochondrion, to their mature size. While most mitochondrial precursor proteins are processed to the mature form in one step by mitochondrial processing peptidase (MPP), the sequential cleavage by MIP of an octapeptide after initial processing by MPP is a required step for a subgroup of nuclear-encoded precursor proteins destined for the matrix or the inner membrane. This is Mitochondrial intermediate peptidase (oct1) from Sclerotinia sclerotiorum (strain ATCC 18683 / 1980 / Ss-1) (White mold).